The chain runs to 201 residues: Large ribosomal subunit protein uL4 (201 aa).

Positions 42-67 (GNSAQKTRSEVSGGGKKPWNQKGTGR) are disordered.

This sequence belongs to the universal ribosomal protein uL4 family. As to quaternary structure, part of the 50S ribosomal subunit.

Its function is as follows. One of the primary rRNA binding proteins, this protein initially binds near the 5'-end of the 23S rRNA. It is important during the early stages of 50S assembly. It makes multiple contacts with different domains of the 23S rRNA in the assembled 50S subunit and ribosome. Functionally, forms part of the polypeptide exit tunnel. The sequence is that of Large ribosomal subunit protein uL4 from Legionella pneumophila (strain Corby).